A 261-amino-acid chain; its full sequence is Cytochrome c oxidase subunit 3 (261 aa).

The Mitochondrial matrix portion of the chain corresponds to 1 to 15 (MTHQTHAYHMVNPSP). A helical membrane pass occupies residues 16-34 (WPLTGALSALLMTSGLIMW). Topologically, residues 35–40 (FHFNST) are mitochondrial intermembrane. A helical membrane pass occupies residues 41–66 (TLLMLGLTTNMLTMYQWWRDVVREST). Over 67-72 (FQGHHT) the chain is Mitochondrial matrix. A helical transmembrane segment spans residues 73 to 105 (PNVQKGLRYGMILFIISEVLFFTGFFWAFYHSS). The Mitochondrial intermembrane segment spans residues 106-128 (LAPTPELGGCWPPTGIHPLNPLE). Residues 129–152 (VPLLNTSVLLASGVSITWAHHSLM) traverse the membrane as a helical segment. Over 153 to 155 (EGN) the chain is Mitochondrial matrix. Residues 156–183 (RNHMLQALFITIALGVYFTLLQASEYYE) form a helical membrane-spanning segment. Residues 184 to 190 (APFTISD) are Mitochondrial intermembrane-facing. A helical transmembrane segment spans residues 191 to 223 (GVYGSTFFVATGFHGLHVIIGSTFLIVCFFRQL). Topologically, residues 224 to 232 (KFHFTSNHH) are mitochondrial matrix. A helical transmembrane segment spans residues 233-256 (FGFEAAAWYWHFVDVVWLFLYVSI). Residues 257 to 261 (YWWGS) lie on the Mitochondrial intermembrane side of the membrane.

Belongs to the cytochrome c oxidase subunit 3 family. Component of the cytochrome c oxidase (complex IV, CIV), a multisubunit enzyme composed of 14 subunits. The complex is composed of a catalytic core of 3 subunits MT-CO1, MT-CO2 and MT-CO3, encoded in the mitochondrial DNA, and 11 supernumerary subunits COX4I, COX5A, COX5B, COX6A, COX6B, COX6C, COX7A, COX7B, COX7C, COX8 and NDUFA4, which are encoded in the nuclear genome. The complex exists as a monomer or a dimer and forms supercomplexes (SCs) in the inner mitochondrial membrane with NADH-ubiquinone oxidoreductase (complex I, CI) and ubiquinol-cytochrome c oxidoreductase (cytochrome b-c1 complex, complex III, CIII), resulting in different assemblies (supercomplex SCI(1)III(2)IV(1) and megacomplex MCI(2)III(2)IV(2)).

The protein resides in the mitochondrion inner membrane. The enzyme catalyses 4 Fe(II)-[cytochrome c] + O2 + 8 H(+)(in) = 4 Fe(III)-[cytochrome c] + 2 H2O + 4 H(+)(out). Functionally, component of the cytochrome c oxidase, the last enzyme in the mitochondrial electron transport chain which drives oxidative phosphorylation. The respiratory chain contains 3 multisubunit complexes succinate dehydrogenase (complex II, CII), ubiquinol-cytochrome c oxidoreductase (cytochrome b-c1 complex, complex III, CIII) and cytochrome c oxidase (complex IV, CIV), that cooperate to transfer electrons derived from NADH and succinate to molecular oxygen, creating an electrochemical gradient over the inner membrane that drives transmembrane transport and the ATP synthase. Cytochrome c oxidase is the component of the respiratory chain that catalyzes the reduction of oxygen to water. Electrons originating from reduced cytochrome c in the intermembrane space (IMS) are transferred via the dinuclear copper A center (CU(A)) of subunit 2 and heme A of subunit 1 to the active site in subunit 1, a binuclear center (BNC) formed by heme A3 and copper B (CU(B)). The BNC reduces molecular oxygen to 2 water molecules using 4 electrons from cytochrome c in the IMS and 4 protons from the mitochondrial matrix. The chain is Cytochrome c oxidase subunit 3 (MT-CO3) from Gazella cuvieri (Cuvier's gazelle).